The following is a 68-amino-acid chain: Small ribosomal subunit protein bS21 (68 aa).

The protein belongs to the bacterial ribosomal protein bS21 family.

This Jannaschia sp. (strain CCS1) protein is Small ribosomal subunit protein bS21.